Consider the following 220-residue polypeptide: Ribosomal RNA large subunit methyltransferase E (220 aa).

The S-adenosyl-L-methionine site is built by G64, W66, D84, D100, and D125. The active-site Proton acceptor is K165.

Belongs to the class I-like SAM-binding methyltransferase superfamily. RNA methyltransferase RlmE family.

It is found in the cytoplasm. It catalyses the reaction uridine(2552) in 23S rRNA + S-adenosyl-L-methionine = 2'-O-methyluridine(2552) in 23S rRNA + S-adenosyl-L-homocysteine + H(+). Its function is as follows. Specifically methylates the uridine in position 2552 of 23S rRNA at the 2'-O position of the ribose in the fully assembled 50S ribosomal subunit. This Thiobacillus denitrificans (strain ATCC 25259 / T1) protein is Ribosomal RNA large subunit methyltransferase E.